The primary structure comprises 327 residues: Alkanal monooxygenase beta chain (327 aa).

It belongs to the bacterial luciferase oxidoreductase family. In terms of assembly, heterodimer of an alpha and a beta chain.

It carries out the reaction a long-chain fatty aldehyde + FMNH2 + O2 = a long-chain fatty acid + hnu + FMN + H2O + 2 H(+). Its function is as follows. Light-emitting reaction in luminous bacteria. The specific role of the beta subunit is unknown, but it is absolutely required for bioluminescence activity. The chain is Alkanal monooxygenase beta chain (luxB) from Photorhabdus luminescens (Xenorhabdus luminescens).